The chain runs to 563 residues: Endoglucanase B (563 aa).

Residues Met-1–Ala-27 constitute a signal peptide (or 31). Catalysis depends on Glu-204, which acts as the Proton donor. Residue Glu-363 is the Nucleophile of the active site. The disordered stretch occupies residues Ser-476–Thr-495. Positions Asp-496–Tyr-562 constitute a Dockerin domain.

The protein belongs to the glycosyl hydrolase 5 (cellulase A) family.

It carries out the reaction Endohydrolysis of (1-&gt;4)-beta-D-glucosidic linkages in cellulose, lichenin and cereal beta-D-glucans.. Its function is as follows. This enzyme catalyzes the endohydrolysis of 1,4-beta-glucosidic linkages in cellulose, lichenin and cereal beta-D-glucans. The protein is Endoglucanase B (celB) of Acetivibrio thermocellus (strain ATCC 27405 / DSM 1237 / JCM 9322 / NBRC 103400 / NCIMB 10682 / NRRL B-4536 / VPI 7372) (Clostridium thermocellum).